Consider the following 306-residue polypeptide: Ornithine carbamoyltransferase (306 aa).

Carbamoyl phosphate is bound by residues 53–56 (STRT), Q80, R104, and 131–134 (HPCQ). Residues N162, D219, and 223 to 224 (SM) each bind L-ornithine. Residues 259–260 (CL) and R287 contribute to the carbamoyl phosphate site.

Belongs to the aspartate/ornithine carbamoyltransferase superfamily. OTCase family.

It is found in the cytoplasm. The catalysed reaction is carbamoyl phosphate + L-ornithine = L-citrulline + phosphate + H(+). It functions in the pathway amino-acid biosynthesis; L-arginine biosynthesis; L-arginine from L-ornithine and carbamoyl phosphate: step 1/3. Its function is as follows. Reversibly catalyzes the transfer of the carbamoyl group from carbamoyl phosphate (CP) to the N(epsilon) atom of ornithine (ORN) to produce L-citrulline. This chain is Ornithine carbamoyltransferase, found in Acinetobacter baylyi (strain ATCC 33305 / BD413 / ADP1).